The primary structure comprises 386 residues: MAIRKSQVYLSLANSYLIDSPQPSTLNYWYNLGSLLGLCLVIQIASGIFLAMHYSSHIDLAFASVEHIMRDVNYGYLIRYIHANGASFFFVCMYAHIGKAIYYGSYKSPRVLVWVIGVVIFIITMATAFLGYCWVYGQMSHWGATVITNLFSAIPFIGKDLVPFIWGSFSVSNPTIQRFFALHYLCPFILAALVIMHLMALHVHGSSNPLGISSNIDRLPFHGYFVFKDLVTVFVFLLIFSLFVFFSPNTLGHPDNYIPGNPLVTPASIVPEWYLLPFYAILRSIPDKLGGVIAMFAAILILLVLPVTDRSVVRGNTFKIISKTFFFLFLYNFILLGQLGQLHVEVPFIQLGQFATLNYFLYFIFIVPVVSTLENILFYIGRVHNN.

Helical transmembrane passes span 32 to 52 (LGSL…FLAM), 76 to 98 (YLIR…AHIG), 113 to 133 (VWVI…LGYC), and 179 to 199 (FFAL…MHLM). Positions 82 and 96 each coordinate heme b. Positions 183 and 197 each coordinate heme b. Histidine 202 lines the a ubiquinone pocket. A run of 4 helical transmembrane segments spans residues 225–245 (FVFK…LFVF), 289–309 (LGGV…PVTD), 321–341 (ISKT…QLGQ), and 348–368 (FIQL…FIVP).

It belongs to the cytochrome b family. As to quaternary structure, fungal cytochrome b-c1 complex contains 10 subunits; 3 respiratory subunits, 2 core proteins and 5 low-molecular weight proteins. Cytochrome b-c1 complex is a homodimer. The cofactor is heme b.

It localises to the mitochondrion inner membrane. In terms of biological role, component of the ubiquinol-cytochrome c reductase complex (complex III or cytochrome b-c1 complex) that is part of the mitochondrial respiratory chain. The b-c1 complex mediates electron transfer from ubiquinol to cytochrome c. Contributes to the generation of a proton gradient across the mitochondrial membrane that is then used for ATP synthesis. The polypeptide is Cytochrome b (COB) (Wickerhamomyces canadensis (Yeast)).